The primary structure comprises 448 residues: Probable glycine dehydrogenase (decarboxylating) subunit 1 (448 aa).

This sequence belongs to the GcvP family. N-terminal subunit subfamily. As to quaternary structure, the glycine cleavage system is composed of four proteins: P, T, L and H. In this organism, the P 'protein' is a heterodimer of two subunits.

The catalysed reaction is N(6)-[(R)-lipoyl]-L-lysyl-[glycine-cleavage complex H protein] + glycine + H(+) = N(6)-[(R)-S(8)-aminomethyldihydrolipoyl]-L-lysyl-[glycine-cleavage complex H protein] + CO2. Functionally, the glycine cleavage system catalyzes the degradation of glycine. The P protein binds the alpha-amino group of glycine through its pyridoxal phosphate cofactor; CO(2) is released and the remaining methylamine moiety is then transferred to the lipoamide cofactor of the H protein. This chain is Probable glycine dehydrogenase (decarboxylating) subunit 1 (gcvPA), found in Bacillus subtilis (strain 168).